The chain runs to 843 residues: Eisosome protein 1 (843 aa).

Residues 1–53 form a disordered region; it reads MSLISAVEDRDIHNIGKTSGGGSRTSSITSSKKSLKHGSKSLRKPKVYQTTGE. Serine 2 carries the N-acetylserine modification. Phosphoserine is present on serine 2. The segment covering 33–46 has biased composition (basic residues); that stretch reads KSLKHGSKSLRKPK. Phosphoserine is present on residues serine 88 and serine 130. The tract at residues 120 to 174 is disordered; it reads KMGPKVVRNNSITSATSKTSKESQTKRKSKESPGAAASKAYSMTMETTSLSSQTN. 2 stretches are compositionally biased toward polar residues: residues 127–137 and 163–174; these read RNNSITSATSK and TMETTSLSSQTN. Residues serine 182, serine 401, serine 584, and serine 710 each carry the phosphoserine modification. Residues 717 to 843 form a disordered region; the sequence is DLPTQLEKIE…QDAISNQEKK (127 aa). Residue threonine 720 is modified to Phosphothreonine. Over residues 752–764 the composition is skewed to low complexity; it reads STAAKEATETSSA. Phosphoserine is present on residues serine 763 and serine 775. Over residues 781-797 the composition is skewed to basic and acidic residues; that stretch reads SGKEDANDCKSAEHSKE. Positions 798-810 are enriched in polar residues; that stretch reads ISVSQKAGNNKSL. Phosphoserine is present on residues serine 816, serine 828, serine 829, and serine 838.

This sequence belongs to the EIS1 family.

It is found in the cytoplasmic granule. The protein resides in the cell membrane. Required for normal formation of eisosomes, large cytoplasmic protein assemblies that localize to specialized domains on plasma membrane and mark the site of endocytosis. In Saccharomyces cerevisiae (strain ATCC 204508 / S288c) (Baker's yeast), this protein is Eisosome protein 1 (EIS1).